The chain runs to 122 residues: Large ribosomal subunit protein uL14 (122 aa).

It belongs to the universal ribosomal protein uL14 family. Part of the 50S ribosomal subunit. Forms a cluster with proteins L3 and L19. In the 70S ribosome, L14 and L19 interact and together make contacts with the 16S rRNA in bridges B5 and B8.

Its function is as follows. Binds to 23S rRNA. Forms part of two intersubunit bridges in the 70S ribosome. This chain is Large ribosomal subunit protein uL14, found in Ligilactobacillus salivarius (strain UCC118) (Lactobacillus salivarius).